Here is a 117-residue protein sequence, read N- to C-terminus: Large ribosomal subunit protein bL20c (117 aa).

Belongs to the bacterial ribosomal protein bL20 family.

Its subcellular location is the plastid. The protein localises to the chloroplast. Functionally, binds directly to 23S ribosomal RNA and is necessary for the in vitro assembly process of the 50S ribosomal subunit. It is not involved in the protein synthesizing functions of that subunit. The protein is Large ribosomal subunit protein bL20c of Calycanthus floridus var. glaucus (Eastern sweetshrub).